Here is a 228-residue protein sequence, read N- to C-terminus: Protein GrpE (228 aa).

Over residues 1–22 the composition is skewed to basic and acidic residues; the sequence is MDDKQKTNEEVKASSFDSEKSS. The tract at residues 1–71 is disordered; sequence MDDKQKTNEE…DQTNTNNNEL (71 aa). A compositionally biased stretch (polar residues) spans 38–53; the sequence is QNVQHDNGSNPAQKQN.

This sequence belongs to the GrpE family. As to quaternary structure, homodimer.

Its subcellular location is the cytoplasm. In terms of biological role, participates actively in the response to hyperosmotic and heat shock by preventing the aggregation of stress-denatured proteins, in association with DnaK and GrpE. It is the nucleotide exchange factor for DnaK and may function as a thermosensor. Unfolded proteins bind initially to DnaJ; upon interaction with the DnaJ-bound protein, DnaK hydrolyzes its bound ATP, resulting in the formation of a stable complex. GrpE releases ADP from DnaK; ATP binding to DnaK triggers the release of the substrate protein, thus completing the reaction cycle. Several rounds of ATP-dependent interactions between DnaJ, DnaK and GrpE are required for fully efficient folding. The polypeptide is Protein GrpE (Coprothermobacter proteolyticus (strain ATCC 35245 / DSM 5265 / OCM 4 / BT)).